Here is a 104-residue protein sequence, read N- to C-terminus: NADH-quinone oxidoreductase subunit K (104 aa).

A run of 3 helical transmembrane segments spans residues 4-24, 28-48, and 64-84; these read VAYYLVLSAILFSIGVGAFLI, IITIFMSIELMLNAVNLSFVA, and IFVFFVMVVAAAEAAVGLAII.

This sequence belongs to the complex I subunit 4L family. NDH-1 is composed of 14 different subunits. Subunits NuoA, H, J, K, L, M, N constitute the membrane sector of the complex.

The protein resides in the cell inner membrane. It catalyses the reaction a quinone + NADH + 5 H(+)(in) = a quinol + NAD(+) + 4 H(+)(out). NDH-1 shuttles electrons from NADH, via FMN and iron-sulfur (Fe-S) centers, to quinones in the respiratory chain. The immediate electron acceptor for the enzyme in this species is believed to be ubiquinone. Couples the redox reaction to proton translocation (for every two electrons transferred, four hydrogen ions are translocated across the cytoplasmic membrane), and thus conserves the redox energy in a proton gradient. The chain is NADH-quinone oxidoreductase subunit K from Acidobacterium capsulatum (strain ATCC 51196 / DSM 11244 / BCRC 80197 / JCM 7670 / NBRC 15755 / NCIMB 13165 / 161).